A 507-amino-acid polypeptide reads, in one-letter code: ATP synthase subunit alpha (507 aa).

The segment at 118 to 141 is disordered; it reads VDGLGPIETTETRPIESPAPGVMD. 172–179 lines the ATP pocket; that stretch reads GDRQTGKT.

This sequence belongs to the ATPase alpha/beta chains family. In terms of assembly, F-type ATPases have 2 components, CF(1) - the catalytic core - and CF(0) - the membrane proton channel. CF(1) has five subunits: alpha(3), beta(3), gamma(1), delta(1), epsilon(1). CF(0) has three main subunits: a(1), b(2) and c(9-12). The alpha and beta chains form an alternating ring which encloses part of the gamma chain. CF(1) is attached to CF(0) by a central stalk formed by the gamma and epsilon chains, while a peripheral stalk is formed by the delta and b chains.

The protein resides in the cell membrane. It catalyses the reaction ATP + H2O + 4 H(+)(in) = ADP + phosphate + 5 H(+)(out). Produces ATP from ADP in the presence of a proton gradient across the membrane. The alpha chain is a regulatory subunit. The sequence is that of ATP synthase subunit alpha from Anoxybacillus flavithermus (strain DSM 21510 / WK1).